The primary structure comprises 154 residues: 3-dehydroquinate dehydratase (154 aa).

Tyr-23 serves as the catalytic Proton acceptor. Positions 74, 80, and 87 each coordinate substrate. Catalysis depends on His-100, which acts as the Proton donor. Substrate contacts are provided by residues 101-102 and Arg-111; that span reads LS.

This sequence belongs to the type-II 3-dehydroquinase family. Homododecamer.

It carries out the reaction 3-dehydroquinate = 3-dehydroshikimate + H2O. It participates in metabolic intermediate biosynthesis; chorismate biosynthesis; chorismate from D-erythrose 4-phosphate and phosphoenolpyruvate: step 3/7. Catalyzes a trans-dehydration via an enolate intermediate. This chain is 3-dehydroquinate dehydratase, found in Actinobacillus pleuropneumoniae serotype 5b (strain L20).